The primary structure comprises 2813 residues: MKLNPQQAPLYGDCVVTVLLAEEDKAEDDVVFYLVFLGSTLRHCTSTRKVSSDTLETIAPGHDCCETVKVQLCASKEGLPVFVVAEEDFHFVQDEAYDAAQFLATSAGNQQALNFTRFLDQSGPPSGDVNSLDKKLVLAFRHLKLPTEWNVLGTDQSLHDAGPRETLMHFAVRLGLLRLTWFLLQKPGGRGALSIHNQEGATPVSLALERGYHKLHQLLTEENAGEPDSWSSLSYEIPYGDCSVRHHRELDIYTLTSESDSHHEHPFPGDGCTGPIFKLMNIQQQLMKTNLKQMDSLMPLMMTAQDPSSAPETDGQFLPCAPEPTDPQRLSSSEETESTQCCPGSPVAQTESPCDLSSIVEEENTDRSCRKKNKGVERKGEEVEPAPIVDSGTVSDQDSCLQSLPDCGVKGTEGLSSCGNRNEETGTKSSGMPTDQESLSSGDAVLQRDLVMEPGTAQYSSGGELGGISTTNVSTPDTAGEMEHGLMNPDATVWKNVLQGGESTKERFENSNIGTAGASDVHVTSKPVDKISVPNCAPAASSLDGNKPAESSLAFSNEETSTEKTAETETSRSREESADAPVDQNSVVIPAAAKDKISDGLEPYTLLAAGIGEAMSPSDLALLGLEEDVMPHQNSETNSSHAQSQKGKSSPICSTTGDDKLCADSACQQNTVTSSGDLVAKLCDNIVSESESTTARQPSSQDPPDASHCEDPQAHTVTSDPVRDTQERADFCPFKVVDNKGQRKDVKLDKPLTNMLEVVSHPHPVVPKMEKELVPDQAVISDSTFSLANSPGSESVTKDDALSFVPSQKEKGTATPELHTATDYRDGPDGNSNEPDTRPLEDRAVGLSTSSTAAELQHGMGNTSLTGLGGEHEGPAPPAIPEALNIKGNTDSSLQSVGKATLALDSVLTEEGKLLVVSESSAAQEQDKDKAVTCSSIKENALSSGTLQEEQRTPPPGQDTQQFHEKSISADCAKDKALQLSNSPGASSAFLKAETEHNKEVAPQVSLLTQGGAAQSLVPPGASLATESRQEALGAEHNSSALLPCLLPDGSDGSDALNCSQPSPLDVGVKNTQSQGKTSACEVSGDVTVDVTGVNALQGMAEPRRENISHNTQDILIPNVLLSQEKNAVLGLPVALQDKAVTDPQGVGTPEMIPLDWEKGKLEGADHSCTMGDAEEAQIDDEAHPVLLQPVAKELPTDMELSAHDDGAPAGVREVMRAPPSGRERSTPSLPCMVSAQDAPLPKGADLIEEAASRIVDAVIEQVKAAGALLTEGEACHMSLSSPELGPLTKGLESAFTEKVSTFPPGESLPMGSTPEEATGSLAGCFAGREEPEKIILPVQGPEPAAEMPDVKAEDEVDFRASSISEEVAVGSIAATLKMKQGPMTQAINRENWCTIEPCPDAASLLASKQSPECENFLDVGLGRECTSKQGVLKRESGSDSDLFHSPSDDMDSIIFPKPEEEHLACDITGSSSSTDDTASLDRHSSHGSDVSLSQILKPNRSRDRQSLDGFYSHGMGAEGRESESEPADPGDVEEEEMDSITEVPANCSVLRSSMRSLSPFRRHSWGPGKNAASDAEMNHRSSMRVLGDVVRRPPIHRRSFSLEGLTGGAGVGNKPSSSLEVSSANAEELRHPFSGEERVDSLVSLSEEDLESDQREHRMFDQQICHRSKQQGFNYCTSAISSPLTKSISLMTISHPGLDNSRPFHSTFHNTSANLTESITEENYNFLPHSPSKKDSEWKSGTKVSRTFSYIKNKMSSSKKSKEKEKEKDKIKEKEKDSKDKEKDKKTVNGHTFSSIPVVGPISCSQCMKPFTNKDAYTCANCSAFVHKGCRESLASCAKVKMKQPKGSLQAHDTSSLPTVIMRNKPSQPKERPRSAVLLVDETATTPIFANRRSQQSVSLSKSVSIQNITGVGNDENMSNTWKFLSHSTDSLNKISKVNESTESLTDEGVGTDMNEGQLLGDFEIESKQLEAESWSRIIDSKFLKQQKKDVVKRQEVIYELMQTEFHHVRTLKIMSGVYSQGMMADLLFEQQMVEKLFPCLDELISIHSQFFQRILERKKESLVDKSEKNFLIKRIGDVLVNQFSGENAERLKKTYGKFCGQHNQSVNYFKDLYAKDKRFQAFVKKKMSSSVVRRLGIPECILLVTQRITKYPVLFQRILQCTKDNEVEQEDLAQSLSLVKDVIGAVDSKVASYEKKVRLNEIYTKTDSKSIMRMKSGQMFAKEDLKRKKLVRDGSVFLKNAAGRLKEVQAVLLTDILVFLQEKDQKYIFASLDQKSTVISLKKLIVREVAHEEKGLFLISMGMTDPEMVEVHASSKEERNSWIQIIQDTINTLNRDEDEGIPSENEEEKKMLDTRARELKEQLHQKDQKILLLLEEKEMIFRDMAECSTPLPEDCSPTHSPRVLFRSNTEEALKGGPLMKSAINEVEILQGLVSGNLGGTLGPTVSSPIEQDVVGPVSLPRRAETFGGFDSHQMNASKGGEKEEGDDGQDLRRTESDSGLKKGGNANLVFMLKRNSEQVVQSVVHLYELLSALQGVVLQQDSYIEDQKLVLSERALTRSLSRPSSLIEQEKQRSLEKQRQDLANLQKQQAQYLEEKRRREREWEARERELREREALLAQREEEVQQGQQDLEKEREELQQKKGTYQYDLERLRAAQKQLEREQEQLRREAERLSQRQTERDLCQVSHPHTKLMRIPSFFPSPEEPPSPSAPSIAKSGSLDSELSVSPKRNSISRTHKDKGPFHILSSTSQTNKGPEGQSQAPASTSASTRLFGLTKPKEKKEKKKKNKTSRSQPGDGPASEVSAEGEEIFC.

Disordered regions lie at residues 304 to 400 and 415 to 439; these read AQDP…QDSC and LSSCGNRNEETGTKSSGMPTDQESL. Residues 427–439 are compositionally biased toward polar residues; the sequence is TKSSGMPTDQESL. The segment at 494–516 is important for interaction with PRKAR2A; sequence WKNVLQGGESTKERFENSNIGTA. Disordered stretches follow at residues 539–585, 632–653, and 690–726; these read AASS…VDQN, HQNSETNSSHAQSQKGKSSPIC, and SESTTARQPSSQDPPDASHCEDPQAHTVTSDPVRDTQ. Positions 561-577 are enriched in basic and acidic residues; sequence STEKTAETETSRSREES. Polar residues predominate over residues 690–702; it reads SESTTARQPSSQD. At serine 790 the chain carries Phosphoserine. 2 disordered regions span residues 805–856 and 939–965; these read VPSQ…AAEL and ENALSSGTLQEEQRTPPPGQDTQQFHE. Position 815 is a phosphothreonine (threonine 815). Residues 835-844 are compositionally biased toward basic and acidic residues; the sequence is PDTRPLEDRA. Composition is skewed to polar residues over residues 847 to 856 and 939 to 948; these read LSTSSTAAEL and ENALSSGTLQ. The residue at position 953 (threonine 953) is a Phosphothreonine. Serine 983 is modified (phosphoserine). Disordered stretches follow at residues 1431–1455 and 1467–1542; these read GVLKRESGSDSDLFHSPSDDMDSII and DITG…DSIT. Residues 1467–1478 show a composition bias toward low complexity; it reads DITGSSSSTDDT. A compositionally biased stretch (polar residues) spans 1488 to 1497; the sequence is GSDVSLSQIL. Serine 1489, serine 1507, serine 1540, serine 1565, and serine 1602 each carry phosphoserine. Residues 1525–1540 show a composition bias toward acidic residues; sequence SEPADPGDVEEEEMDS. The interval 1585–1715 is important for interaction with MAP2K3; that stretch reads RVLGDVVRRP…HSTFHNTSAN (131 aa). A disordered region spans residues 1601–1638; the sequence is FSLEGLTGGAGVGNKPSSSLEVSSANAEELRHPFSGEE. Residues 1615 to 1626 show a composition bias toward polar residues; that stretch reads KPSSSLEVSSAN. Basic and acidic residues predominate over residues 1628–1638; sequence EELRHPFSGEE. 3 positions are modified to phosphoserine: serine 1642, serine 1645, and serine 1647. Lysine 1670 is modified (N6-methyllysine). Positions 1755–1793 are disordered; that stretch reads KMSSSKKSKEKEKEKDKIKEKEKDSKDKEKDKKTVNGHT. Residues 1758 to 1790 adopt a coiled-coil conformation; sequence SSKKSKEKEKEKDKIKEKEKDSKDKEKDKKTVN. Over residues 1761–1788 the composition is skewed to basic and acidic residues; it reads KSKEKEKEKDKIKEKEKDSKDKEKDKKT. The Phorbol-ester/DAG-type zinc-finger motif lies at 1791 to 1838; that stretch reads GHTFSSIPVVGPISCSQCMKPFTNKDAYTCANCSAFVHKGCRESLASC. Residues serine 1876, serine 1895, and serine 1929 each carry the phosphoserine modification. Residues 1919–2813 are interaction with ESR1; it reads MSNTWKFLSH…VSAEGEEIFC (895 aa). Residue threonine 1930 is modified to Phosphothreonine. Serine 1932 and serine 1945 each carry phosphoserine. Positions 1994 to 2191 constitute a DH domain; that stretch reads KRQEVIYELM…KDVIGAVDSK (198 aa). The 103-residue stretch at 2231-2333 folds into the PH domain; that stretch reads KLVRDGSVFL…WIQIIQDTIN (103 aa). A phosphoserine mark is found at serine 2345 and serine 2398. A coiled-coil region spans residues 2345 to 2381; that stretch reads SENEEEKKMLDTRARELKEQLHQKDQKILLLLEEKEM. Residues 2466-2502 are disordered; sequence ETFGGFDSHQMNASKGGEKEEGDDGQDLRRTESDSGL. Residue threonine 2467 is modified to Phosphothreonine. A Phosphoserine modification is found at serine 2473. Over residues 2491-2502 the composition is skewed to basic and acidic residues; the sequence is QDLRRTESDSGL. Residues serine 2563 and serine 2566 each carry the phosphoserine modification. The stretch at 2568-2683 forms a coiled coil; the sequence is LIEQEKQRSL…RLSQRQTERD (116 aa). Basic and acidic residues predominate over residues 2665 to 2684; the sequence is QEQLRREAERLSQRQTERDL. The tract at residues 2665 to 2813 is disordered; it reads QEQLRREAER…VSAEGEEIFC (149 aa). Residues serine 2703, serine 2709, and serine 2728 each carry the phosphoserine modification. Residues 2720–2735 are compositionally biased toward polar residues; that stretch reads SLDSELSVSPKRNSIS. The segment covering 2760 to 2771 has biased composition (low complexity); the sequence is QSQAPASTSAST.

In terms of assembly, interacts with the cAMP-dependent protein kinase (PKA) holoenzyme and with the regulatory subunit PRKAR2A. Interacts with RHOA. Also interacts with RHOB and RHOC. Identified in a ternary complex with RHOA and PRKAR2A. Identified in a complex with NR3C1 and RHOA. Interacts with BRAF and KSR1. Identified in a complex with BRAF and KSR1. Component of a signaling complex containing at least AKAP13, PKN1, MAPK14, ZAK and MAP2K3. Within this complex, AKAP13 interacts directly with PKN1, which in turn recruits MAPK14, MAP2K3 and ZAK. Interacts (phosphorylated form) with YWHAB and YWHAZ. Interaction with YWHAB inhibits activation of RHOA, interferes with PKN1 binding and activation of MAP kinases. Interacts with GNA12. Interacts with IKBKB. Interacts with ESR1, THRA, PPARA and NME2. Interacts (via the C-terminal domain after the PH domain) with MEF2C and RXRB. Interacts (via the C-terminal domain after the PH domain) with PRKD1. In terms of tissue distribution, detected in mammary gland. Detected in heart (at protein level). Expressed as a 5.3 kb transcript in hematopoietic cells, skeletal muscle, lung, heart, estrogen-responsive reproductive tissues, including breast ductal epithelium. Also found in testis and breast cancer cell lines. Predominantly expressed as a 10 kb transcript in the heart and at lower levels in the lung, placenta, kidney, pancreas, skeletal muscle and liver. Transcripts of between 6-9 kb are also expressed in myeloid and lymphoid lineages, a variety of epithelial tissues, and in skeletal muscle.

It is found in the cytoplasm. It localises to the cytosol. The protein resides in the cell cortex. Its subcellular location is the nucleus. The protein localises to the membrane. In terms of biological role, scaffold protein that plays an important role in assembling signaling complexes downstream of several types of G protein-coupled receptors. Activates RHOA in response to signaling via G protein-coupled receptors via its function as Rho guanine nucleotide exchange factor. May also activate other Rho family members. Part of a kinase signaling complex that links ADRA1A and ADRA1B adrenergic receptor signaling to the activation of downstream p38 MAP kinases, such as MAPK11 and MAPK14. Part of a signaling complex that links ADRA1B signaling to the activation of RHOA and IKBKB/IKKB, leading to increased NF-kappa-B transcriptional activity. Part of a RHOA-dependent signaling cascade that mediates responses to lysophosphatidic acid (LPA), a signaling molecule that activates G-protein coupled receptors and potentiates transcriptional activation of the glucocorticoid receptor NR3C1. Part of a signaling cascade that stimulates MEF2C-dependent gene expression in response to lysophosphatidic acid (LPA). Part of a signaling pathway that activates MAPK11 and/or MAPK14 and leads to increased transcription activation of the estrogen receptors ESR1 and ESR2. Part of a signaling cascade that links cAMP and EGFR signaling to BRAF signaling and to PKA-mediated phosphorylation of KSR1, leading to the activation of downstream MAP kinases, such as MAPK1 or MAPK3. Functions as a scaffold protein that anchors cAMP-dependent protein kinase (PKA) and PRKD1. This promotes activation of PRKD1, leading to increased phosphorylation of HDAC5 and ultimately cardiomyocyte hypertrophy. Has no guanine nucleotide exchange activity on CDC42, Ras or Rac. Required for normal embryonic heart development, and in particular for normal sarcomere formation in the developing cardiomyocytes. Plays a role in cardiomyocyte growth and cardiac hypertrophy in response to activation of the beta-adrenergic receptor by phenylephrine or isoproterenol. Required for normal adaptive cardiac hypertrophy in response to pressure overload. Plays a role in osteogenesis. The chain is A-kinase anchor protein 13 (AKAP13) from Homo sapiens (Human).